The sequence spans 471 residues: MEKQENVGHIVQIFGPVIDVQFPNEHMPAILSALEVKINDESIIFEVAQHLGEGIVRAIAMSMTYNLSKGLEVYDTGSQISVPVGKQVLSRMFNVLGQPIDGGKPLDSFIKNPIHAKAPTYLEQKATSEILVTGIKVIDLLIPFIKGGKIGLFGGAGVGKTVLVQELINNIASKHGGLSVFAGVGERSREGNDLYFEMKKAGVLDKTALVFGQMNEPPGARMRVALSALTMAEYFRDYENQDVLLFIDNIFRFTQAGSEVSTLLGRIPSTVGYQPTLSTEMGQLQERITSTIRGSITSVQAVYVPADDITDPAPATTFSHLDAKTVLDRGIAALGIYPAVDPLASSSRALEPNIVGKKHYLVAKKVVQILQRFKELQDIIAILGVDELSESDKQVVARARRIRNFLSQPFFVAQKFSGIQGQFIKIQDTVNNFDELLSGKYDNIPEEAFLYVGTIDQALEKAKKMGWSEKN.

ATP is bound at residue G154–T161.

This sequence belongs to the ATPase alpha/beta chains family. In terms of assembly, F-type ATPases have 2 components, CF(1) - the catalytic core - and CF(0) - the membrane proton channel. CF(1) has five subunits: alpha(3), beta(3), gamma(1), delta(1), epsilon(1). CF(0) has three main subunits: a(1), b(2) and c(9-12). The alpha and beta chains form an alternating ring which encloses part of the gamma chain. CF(1) is attached to CF(0) by a central stalk formed by the gamma and epsilon chains, while a peripheral stalk is formed by the delta and b chains.

It localises to the cell membrane. The enzyme catalyses ATP + H2O + 4 H(+)(in) = ADP + phosphate + 5 H(+)(out). Functionally, produces ATP from ADP in the presence of a proton gradient across the membrane. The catalytic sites are hosted primarily by the beta subunits. The chain is ATP synthase subunit beta from Mesomycoplasma hyopneumoniae (strain 7448) (Mycoplasma hyopneumoniae).